The chain runs to 412 residues: uncharacterized protein (412 aa).

3 disordered regions span residues 150 to 171 (NTPG…QLGD), 177 to 196 (QITS…QQQQ), and 302 to 412 (QAQQ…PLNP). The span at 156-168 (QAQQQQQQQQQQQ) shows a compositional bias: low complexity. Polar residues-rich tracts occupy residues 177–187 (QITSSNNSGNS) and 310–321 (MGSSPTHSSPTI). Positions 335-345 (GGIINTNTNLN) are enriched in low complexity. A compositionally biased stretch (polar residues) spans 350–363 (VSPNQPMPNSSPIL). Composition is skewed to low complexity over residues 364-373 (PTNASSVVPP) and 381-394 (TSNN…TTSP).

This is an uncharacterized protein from Dictyostelium discoideum (Social amoeba).